The following is a 121-amino-acid chain: MANKKIIGNLGEDIALEYLEKLGYTLIERNFKGKKTRGEIDLVMTKGVVIVFIEVKYRRQGSFGYAACSISDRKKKKLYETAEEYLIEKGLSFNQKCSFGAVLIDDTHYNREISFIEDIFI.

It belongs to the UPF0102 family.

This Brachyspira hyodysenteriae (strain ATCC 49526 / WA1) protein is UPF0102 protein BHWA1_02005.